Consider the following 75-residue polypeptide: Dermaseptin-A3 (75 aa).

An N-terminal signal peptide occupies residues Met-1–Cys-22. Positions Glu-23–Leu-43 are excised as a propeptide. Residue Gln-72 is modified to Glutamine amide. Residues Glu-74 to Gln-75 constitute a propeptide that is removed on maturation.

Belongs to the frog skin active peptide (FSAP) family. Dermaseptin subfamily. As to expression, expressed by the skin glands.

It localises to the secreted. Functionally, possesses a potent antimicrobial activity against Gram-positive and Gram-negative bacteria. Probably acts by disturbing membrane functions with its amphipathic structure. The polypeptide is Dermaseptin-A3 (Agalychnis annae (Blue-sided leaf frog)).